A 213-amino-acid polypeptide reads, in one-letter code: MGQKVHPFGFRLGYNKNWQSRWFSKKEYASFVFEDHNIRKYVKKTLYHAGLSKIEIERAGGKVRLILSTARPGIVIGRKGVEIEKLRADLRRKFSREFSIEVNEIRRPETDAQLVAENIAMQLERRVAFRRAMKRTVSMSRKFGAEGIKVACAGRLAGAEIARSEWYRDGRVPLQTLRADIDYGYAEAHTTYGIIGVKVWIFKGEILDNEVEQ.

Positions Ile38–Arg106 constitute a KH type-2 domain.

This sequence belongs to the universal ribosomal protein uS3 family. As to quaternary structure, part of the 30S ribosomal subunit. Forms a tight complex with proteins S10 and S14.

Its function is as follows. Binds the lower part of the 30S subunit head. Binds mRNA in the 70S ribosome, positioning it for translation. The sequence is that of Small ribosomal subunit protein uS3 from Oleidesulfovibrio alaskensis (strain ATCC BAA-1058 / DSM 17464 / G20) (Desulfovibrio alaskensis).